The chain runs to 300 residues: Formyltetrahydrofolate deformylase (300 aa).

The region spanning 21–102 (RLLVSCPDQP…MTWSLTLASE (82 aa)) is the ACT domain. The active site involves Asp244.

The protein belongs to the PurU family.

The enzyme catalyses (6R)-10-formyltetrahydrofolate + H2O = (6S)-5,6,7,8-tetrahydrofolate + formate + H(+). Its pathway is purine metabolism; IMP biosynthesis via de novo pathway; formate from 10-formyl-5,6,7,8-tetrahydrofolate: step 1/1. Its function is as follows. Catalyzes the hydrolysis of 10-formyltetrahydrofolate (formyl-FH4) to formate and tetrahydrofolate (FH4). The polypeptide is Formyltetrahydrofolate deformylase (Bacillus subtilis (strain 168)).